The sequence spans 344 residues: Uroporphyrinogen decarboxylase (344 aa).

Substrate contacts are provided by residues 27–31 (RQAGR), Phe46, Asp76, Tyr151, Ser206, and His319.

The protein belongs to the uroporphyrinogen decarboxylase family. In terms of assembly, homodimer.

It is found in the cytoplasm. It carries out the reaction uroporphyrinogen III + 4 H(+) = coproporphyrinogen III + 4 CO2. It functions in the pathway porphyrin-containing compound metabolism; protoporphyrin-IX biosynthesis; coproporphyrinogen-III from 5-aminolevulinate: step 4/4. In terms of biological role, catalyzes the decarboxylation of four acetate groups of uroporphyrinogen-III to yield coproporphyrinogen-III. The sequence is that of Uroporphyrinogen decarboxylase from Halalkalibacterium halodurans (strain ATCC BAA-125 / DSM 18197 / FERM 7344 / JCM 9153 / C-125) (Bacillus halodurans).